We begin with the raw amino-acid sequence, 292 residues long: tRNA-cytidine(32) 2-sulfurtransferase (292 aa).

Positions 62 to 67 match the PP-loop motif motif; that stretch reads SGGKDS. [4Fe-4S] cluster contacts are provided by Cys137, Cys140, and Cys228.

It belongs to the TtcA family. As to quaternary structure, homodimer. The cofactor is Mg(2+). It depends on [4Fe-4S] cluster as a cofactor.

It localises to the cytoplasm. It catalyses the reaction cytidine(32) in tRNA + S-sulfanyl-L-cysteinyl-[cysteine desulfurase] + AH2 + ATP = 2-thiocytidine(32) in tRNA + L-cysteinyl-[cysteine desulfurase] + A + AMP + diphosphate + H(+). The protein operates within tRNA modification. Catalyzes the ATP-dependent 2-thiolation of cytidine in position 32 of tRNA, to form 2-thiocytidine (s(2)C32). The sulfur atoms are provided by the cysteine/cysteine desulfurase (IscS) system. The protein is tRNA-cytidine(32) 2-sulfurtransferase of Brucella anthropi (strain ATCC 49188 / DSM 6882 / CCUG 24695 / JCM 21032 / LMG 3331 / NBRC 15819 / NCTC 12168 / Alc 37) (Ochrobactrum anthropi).